The primary structure comprises 102 residues: Small ribosomal subunit protein uS10 (102 aa).

Belongs to the universal ribosomal protein uS10 family. Part of the 30S ribosomal subunit.

Involved in the binding of tRNA to the ribosomes. This is Small ribosomal subunit protein uS10 from Trichlorobacter lovleyi (strain ATCC BAA-1151 / DSM 17278 / SZ) (Geobacter lovleyi).